A 1001-amino-acid polypeptide reads, in one-letter code: uncharacterized protein (1001 aa).

Over residues 939–948 the composition is skewed to basic and acidic residues; it reads KVVDNKRDAS. The segment at 939–1001 is disordered; sequence KVVDNKRDAS…HTSKRVQKKN (63 aa). A phosphoserine mark is found at Ser948 and Ser950.

This is an uncharacterized protein from Schizosaccharomyces pombe (strain 972 / ATCC 24843) (Fission yeast).